Reading from the N-terminus, the 307-residue chain is Putative lipid kinase SERP0390 (307 aa).

The 137-residue stretch at Gln3 to Tyr139 folds into the DAGKc domain. ATP-binding positions include Ser44, Gly74–Glu80, and Thr101. Positions 220, 223, and 225 each coordinate Mg(2+). The active-site Proton acceptor is Glu281.

The protein belongs to the diacylglycerol/lipid kinase family. The cofactor is Mg(2+).

May catalyze the ATP-dependent phosphorylation of lipids other than diacylglycerol (DAG). This is Putative lipid kinase SERP0390 from Staphylococcus epidermidis (strain ATCC 35984 / DSM 28319 / BCRC 17069 / CCUG 31568 / BM 3577 / RP62A).